Consider the following 366-residue polypeptide: Endophilin-B1 (366 aa).

Residues 1–30 (MNIMDFNMKKLAADAGTFLSRAVQFTEEKL) form a membrane-binding amphipathic helix region. The interval 1-37 (MNIMDFNMKKLAADAGTFLSRAVQFTEEKLGQAEKTE) is required for membrane binding. A BAR domain is found at 27–261 (EEKLGQAEKT…LGSFPSTFLS (235 aa)). 2 coiled-coil regions span residues 34-54 (EKTE…CTKQ) and 160-185 (KERK…AKVA). The SH3 domain occupies 306–366 (SGSRKARVLY…VPITYLELLN (61 aa)).

This sequence belongs to the endophilin family. In terms of assembly, homodimer, and heterodimer with SH3GLB2. Binds BAX. Binds DNM1, HTT, AMPH, BIN1 and ARFGAP1.

It is found in the cytoplasm. The protein localises to the golgi apparatus membrane. It localises to the mitochondrion outer membrane. Its function is as follows. May be required for normal outer mitochondrial membrane dynamics. Required for coatomer-mediated retrograde transport in certain cells. May recruit other proteins to membranes with high curvature. May promote membrane fusion. The protein is Endophilin-B1 of Gallus gallus (Chicken).